Consider the following 569-residue polypeptide: MSFLGGSECAANANPLAQFFKQSQHDTSLEQSLRNSAHDTHQNAQIRAPVAMNEAERAHMEQFMNQSTPFNFQPMANELRMIQPDLQTQTTPALRGPRAQNPVPLQIPGQAQPQVSGWSSEFQNTATSQVTHSPSPVSQVRMRSMGMAPRLHLRPFSSANGPIQASSMTNSVMQEDTSQQVDWEQQFKEMEEMEEMEEATAAMQQPAEETVSAQESAFDQVWDNIQETYADNMLSNDEFQAQWEKDFEKYAQTRLNYGEYTFEENNQFRNNLDAYEIGIKLMESGAKLSEAALAFEAAVEQNPGHVDAWLRLGQVQTQNEKELAGIAALEKCLELSPQNLVALMTLAISYINEGYDNAAFATLERWIETKYPEVAERARNANPDIQADDRFSLNKRVTQLFIKAAQLSPEGANMDSEVQTGLGVLFYSMEEYSKTLDCFQAAIEHNPNDALAWNRLGASLANSNKPEQAIEAYSRTLQLNPNFVRARYNLGVSFINMGMYRDAVDHLLTGLSMHEVESLDGSSSVARSNQSTSLIETLKRAFLAMDRRDLIDKVKPGLNVESFRKTYDI.

Cys9 is covalently cross-linked (Glycyl cysteine thioester (Cys-Gly) (interchain with G-Cter in ubiquitin)). Residues 10-32 (AANANPLAQFFKQSQHDTSLEQS) form an amphipathic helix 1 (AH1) region. Lys21 is covalently cross-linked (Glycyl lysine isopeptide (Lys-Gly) (interchain with G-Cter in ubiquitin)). A disordered region spans residues 23 to 42 (SQHDTSLEQSLRNSAHDTHQ). Positions 57–72 (RAHMEQFMNQSTPFNF) are amphipathic helix 2 (AH2). Short sequence motifs (wxxxF/Y motif) lie at residues 118–122 (WSSEF) and 183–187 (WEQQF). The interval 218-234 (FDQVWDNIQETYADNML) is amphipathic helix 4 (AH4). Positions 243–247 (WEKDF) match the WxxxF/Y motif 3 motif. TPR repeat units follow at residues 272–305 (LDAY…NPGH), 306–339 (VDAW…SPQN), 340–377 (LVAL…VAER), 378–415 (ARNA…ANMD), 416–449 (SEVQ…NPND), 450–483 (ALAW…NPNF), and 484–517 (VRAR…HEVE).

This sequence belongs to the peroxisomal targeting signal receptor family. In terms of assembly, interacts (via WxxxF/Y and LVxEF motifs) with PEX14; promoting translocation through the PEX13-PEX14 docking complex. Monoubiquitinated at Cys-9 by PEX2 during PEX5 passage through the retrotranslocation channel: monoubiquitination acts as a signal for PEX5 extraction and is required for proper export from peroxisomes and recycling. When PEX5 recycling is compromised, polyubiquitinated at Lys-21 by PEX10 during its passage through the retrotranslocation channel, leading to its degradation.

It is found in the cytoplasm. The protein localises to the cytosol. The protein resides in the peroxisome matrix. In terms of biological role, receptor that mediates peroxisomal import of proteins containing a C-terminal PTS1-type tripeptide peroxisomal targeting signal (SKL-type). Binds to cargo proteins containing a PTS1 peroxisomal targeting signal in the cytosol, and translocates them into the peroxisome matrix by passing through the PEX13-PEX14 docking complex along with cargo proteins. PEX5 receptor is then retrotranslocated into the cytosol, leading to release of bound cargo in the peroxisome matrix, and reset for a subsequent peroxisome import cycle. This Pichia angusta (Yeast) protein is Peroxisomal targeting signal receptor (PEX5).